The sequence spans 378 residues: MTAPYACQPEESRGRRWPERMSTFRSPWQRDRDRIIHSSAFRRLKHKTQVFVEHEGDYYRTRLTHTIEVAQVARTIAGALGLNTDLAETVALAHDLGHPPFGHTGEDALAALMAPYGGFDHNAQALRIVTRLERHYADFDGLNLTWESLEGIAKHNGPVTGDLPYALAEVNAEWDLELHTNASAEAQVAAVADDVAYNHHDLHDGLRAGLFTEADLAELPVVGEALARVDALHPGLEPMRRRHEALRRVFGVMVEDVIAVAQNRLASLQPQNVQEIRDMEGPIIRFSKPLYQNLKAIKLFLFQRMYRAPSVVVERRRVTEMLNGLFPLFLDDPSKMPRTWFQAAEAAGDETGRARVVLDYVAGMTDRFAIQEAQRLLG.

The HD domain maps to 62 to 198 (RLTHTIEVAQ…AAVADDVAYN (137 aa)).

The protein belongs to the dGTPase family. Type 2 subfamily.

The chain is Deoxyguanosinetriphosphate triphosphohydrolase-like protein from Paracoccus denitrificans (strain Pd 1222).